The chain runs to 400 residues: MTQFASPVLHSLLDTDAYKLHMQQAVFHHYYDVQVAAEFRCRGDDLLGIYADAIREQVDAMQHLRLQEDEFQWLSGLPFFKPDYLNWLREFRYNPAQVCVTNDNGKLNIRLTGPWREVIMWEVPLLAVISELVHHYRSPNAGVDQALDALESKLVDFTALTANLDMSRFHLMDFGTRRRFSREVQQAIVKRLQQESWFVGTSNYDLARRLALTPMGTQAHEWFQAHQQISPDLATSQRAALAAWLNEYPDQLGIALTDCITMDAFLRDFGIEFASRYQGLRHDSGDPVAWGEKAIAHYEKLGIDPLTKTLVFSDNLDLPKAVELYRHFASRVQLSFGIGTRLTCDIPQVKPLNIVIKLVECNGKPVAKLSDSPGKTICHDKAFVRALRKAFDLPQVRKAS.

H220 is modified (phosphohistidine; by autocatalysis).

It belongs to the NAPRTase family. Transiently phosphorylated on a His residue during the reaction cycle. Phosphorylation strongly increases the affinity for substrates and increases the rate of nicotinate D-ribonucleotide production. Dephosphorylation regenerates the low-affinity form of the enzyme, leading to product release.

The catalysed reaction is nicotinate + 5-phospho-alpha-D-ribose 1-diphosphate + ATP + H2O = nicotinate beta-D-ribonucleotide + ADP + phosphate + diphosphate. The protein operates within cofactor biosynthesis; NAD(+) biosynthesis; nicotinate D-ribonucleotide from nicotinate: step 1/1. Its function is as follows. Catalyzes the synthesis of beta-nicotinate D-ribonucleotide from nicotinate and 5-phospho-D-ribose 1-phosphate at the expense of ATP. The polypeptide is Nicotinate phosphoribosyltransferase (Salmonella dublin (strain CT_02021853)).